The chain runs to 164 residues: Aspartic proteinase nepenthesin-1 (164 aa).

A Peptidase A1 domain is found at 17–164 (YLMXLSIGTP…VSFVSAQCGA (148 aa)). Asp-35 is a catalytic residue. Asn-93 is a glycosylation site (N-linked (GlcNAc...) asparagine).

It belongs to the peptidase A1 family. Parenchymal cells surrounding the secretory glands.

The protein resides in the secreted. The catalysed reaction is Similar to pepsin, but also cleaves on either side of Asp and at Lys-|-Arg.. Inhibited by pepstatin and by diazoacetyl-D,L-norleucine methyl ester (DAN) in the presence of Cu(2+) ions. Its function is as follows. Extracellular proteinase found in the pitcher fluid of carnivorous plants. Digest prey for nitrogen uptake. The protein is Aspartic proteinase nepenthesin-1 of Nepenthes distillatoria (Pitcher plant).